The primary structure comprises 281 residues: 2-dehydro-3-deoxyphosphooctonate aldolase (281 aa).

It belongs to the KdsA family.

The protein resides in the cytoplasm. It carries out the reaction D-arabinose 5-phosphate + phosphoenolpyruvate + H2O = 3-deoxy-alpha-D-manno-2-octulosonate-8-phosphate + phosphate. The protein operates within carbohydrate biosynthesis; 3-deoxy-D-manno-octulosonate biosynthesis; 3-deoxy-D-manno-octulosonate from D-ribulose 5-phosphate: step 2/3. Its pathway is bacterial outer membrane biogenesis; lipopolysaccharide biosynthesis. The protein is 2-dehydro-3-deoxyphosphooctonate aldolase of Pseudomonas fluorescens (strain SBW25).